Consider the following 471-residue polypeptide: Putative multidrug resistance protein MdtD (471 aa).

Helical transmembrane passes span 12 to 32, 49 to 69, 77 to 97, 106 to 126, 138 to 158, 165 to 185, 197 to 217, 225 to 245, 263 to 285, 290 to 312, 342 to 362, 396 to 416, and 431 to 451; these read LWIV…VNTA, MVIV…GWLA, IFFT…QSST, VLQG…VMKI, FVTL…GLLV, WIFL…LWLM, FSGF…LDGY, AGLG…LWHA, FSLG…FMTP, IGLG…GSMG, LLFM…VMLF, MVMQ…LGAF, and IFFW…LVFA.

It belongs to the major facilitator superfamily. TCR/Tet family.

The protein resides in the cell inner membrane. This is Putative multidrug resistance protein MdtD from Cronobacter sakazakii (strain ATCC BAA-894) (Enterobacter sakazakii).